A 2278-amino-acid polypeptide reads, in one-letter code: Protein Ycf2 (2278 aa).

1632 to 1639 is a binding site for ATP; it reads GSIGTGRS.

Belongs to the Ycf2 family.

The protein localises to the plastid. The protein resides in the chloroplast stroma. Probable ATPase of unknown function. Its presence in a non-photosynthetic plant (Epifagus virginiana) and experiments in tobacco indicate that it has an essential function which is probably not related to photosynthesis. The chain is Protein Ycf2 from Solanum bulbocastanum (Wild potato).